The primary structure comprises 381 residues: O-antigen chain mannosyltransferase B (381 aa).

This sequence belongs to the glycosyltransferase group 1 family. Glycosyltransferase 4 subfamily.

It catalyses the reaction alpha-D-mannosyl-(1-&gt;3)-N-acetyl-alpha-D-glucosaminyl-di-trans,octa-cis-undecaprenyl diphosphate + 2 GDP-alpha-D-mannose = alpha-D-mannosyl-(1-&gt;3)-alpha-D-mannosyl-(1-&gt;3)-alpha-D-mannosyl-(1-&gt;3)-N-acetyl-alpha-D-glucosaminyl-di-trans,octa-cis-undecaprenyl diphosphate + 2 GDP + 2 H(+). Its pathway is bacterial outer membrane biogenesis; LPS O-antigen biosynthesis. In terms of biological role, mannosyltransferase involved in the biosynthesis of the repeat unit of the lipopolysaccharide (LPS) O-antigen region. Catalyzes the transfer of two alpha-(1-&gt;3)-linked mannose residues to the product of the WbdC enzyme during the synthesis of the adapter region. This chain is O-antigen chain mannosyltransferase B, found in Escherichia coli.